The chain runs to 940 residues: BTB/POZ domain-containing protein FBL11 (940 aa).

Residues 41–109 form the BTB domain; that stretch reads WDMSEILSYG…LYGYDIEITS (69 aa). Positions 155–258 constitute a BACK domain; that stretch reads IQIWSFGLEH…FSLLPLWFIA (104 aa).

Its pathway is protein modification; protein ubiquitination. May act as a substrate-specific adapter of an E3 ubiquitin-protein ligase complex (CUL3-RBX1-BTB) which mediates the ubiquitination and subsequent proteasomal degradation of target proteins. The protein is BTB/POZ domain-containing protein FBL11 (FBL11) of Arabidopsis thaliana (Mouse-ear cress).